Reading from the N-terminus, the 97-residue chain is Stefin-1 (97 aa).

Residues 46–50 (QVVAG) carry the Secondary area of contact motif.

It belongs to the cystatin family.

The protein localises to the cytoplasm. This is an intracellular thiol proteinase inhibitor. The sequence is that of Stefin-1 (Stfa1) from Mus musculus (Mouse).